A 203-amino-acid polypeptide reads, in one-letter code: Small ribosomal subunit protein uS4 (203 aa).

Positions 93–153 (RRLDNVVYRL…EKSKNLQQVK (61 aa)) constitute an S4 RNA-binding domain.

The protein belongs to the universal ribosomal protein uS4 family. Part of the 30S ribosomal subunit. Contacts protein S5. The interaction surface between S4 and S5 is involved in control of translational fidelity.

In terms of biological role, one of the primary rRNA binding proteins, it binds directly to 16S rRNA where it nucleates assembly of the body of the 30S subunit. With S5 and S12 plays an important role in translational accuracy. The sequence is that of Small ribosomal subunit protein uS4 from Lactobacillus delbrueckii subsp. bulgaricus (strain ATCC 11842 / DSM 20081 / BCRC 10696 / JCM 1002 / NBRC 13953 / NCIMB 11778 / NCTC 12712 / WDCM 00102 / Lb 14).